The primary structure comprises 527 residues: Glucose-6-phosphate isomerase (527 aa).

Glu-323 (proton donor) is an active-site residue. Catalysis depends on residues His-352 and Lys-454.

This sequence belongs to the GPI family.

Its subcellular location is the cytoplasm. It carries out the reaction alpha-D-glucose 6-phosphate = beta-D-fructose 6-phosphate. It functions in the pathway carbohydrate biosynthesis; gluconeogenesis. It participates in carbohydrate degradation; glycolysis; D-glyceraldehyde 3-phosphate and glycerone phosphate from D-glucose: step 2/4. Catalyzes the reversible isomerization of glucose-6-phosphate to fructose-6-phosphate. The protein is Glucose-6-phosphate isomerase of Prochlorococcus marinus (strain MIT 9301).